Reading from the N-terminus, the 335-residue chain is Tetraacyldisaccharide 4'-kinase (335 aa).

Residue 59–66 coordinates ATP; that stretch reads TAGGNGKT.

It belongs to the LpxK family.

It catalyses the reaction a lipid A disaccharide + ATP = a lipid IVA + ADP + H(+). It participates in glycolipid biosynthesis; lipid IV(A) biosynthesis; lipid IV(A) from (3R)-3-hydroxytetradecanoyl-[acyl-carrier-protein] and UDP-N-acetyl-alpha-D-glucosamine: step 6/6. Transfers the gamma-phosphate of ATP to the 4'-position of a tetraacyldisaccharide 1-phosphate intermediate (termed DS-1-P) to form tetraacyldisaccharide 1,4'-bis-phosphate (lipid IVA). In Vibrio vulnificus (strain YJ016), this protein is Tetraacyldisaccharide 4'-kinase.